A 388-amino-acid polypeptide reads, in one-letter code: Galactokinase (388 aa).

A substrate-binding site is contributed by 33 to 36 (EHTD). ATP contacts are provided by residues Ser-67 and 124–130 (GAGLSSS). 2 residues coordinate Mg(2+): Ser-130 and Glu-162. The active-site Proton acceptor is Asp-174. Tyr-224 contributes to the substrate binding site.

The protein belongs to the GHMP kinase family. GalK subfamily.

It is found in the cytoplasm. The enzyme catalyses alpha-D-galactose + ATP = alpha-D-galactose 1-phosphate + ADP + H(+). The protein operates within carbohydrate metabolism; galactose metabolism. Catalyzes the transfer of the gamma-phosphate of ATP to D-galactose to form alpha-D-galactose-1-phosphate (Gal-1-P). This Lacticaseibacillus paracasei (strain ATCC 334 / BCRC 17002 / CCUG 31169 / CIP 107868 / KCTC 3260 / NRRL B-441) (Lactobacillus paracasei) protein is Galactokinase.